We begin with the raw amino-acid sequence, 348 residues long: Rhodopsin (348 aa).

M1 is subject to N-acetylmethionine. Residues 1–36 (MNGTEGPNFYVPFSNKTGVVRSPFEAPQYYLAEPWQ) lie on the Extracellular side of the membrane. N2 and N15 each carry an N-linked (GlcNAc...) asparagine glycan. The helical transmembrane segment at 37 to 61 (FSMLAAYMFLLIVLGFPINFLTLYV) threads the bilayer. Residues 62–73 (TVQHKKLRTPLN) are Cytoplasmic-facing. Residues 74 to 96 (YILLNLAVADLFMVFGGFTTTLY) form a helical membrane-spanning segment. Residues 97–110 (TSLHGYFVFGPTGC) lie on the Extracellular side of the membrane. An intrachain disulfide couples C110 to C187. Residues 111–133 (NLEGFFATLGGEIALWSLVVLAI) form a helical membrane-spanning segment. Positions 134-136 (ERY) match the 'Ionic lock' involved in activated form stabilization motif. The Cytoplasmic segment spans residues 134–152 (ERYVVVCKPMSNFRFGENH). Residues 153-173 (AIMGVAFTWVMALACAAPPLV) traverse the membrane as a helical segment. Residues 174 to 202 (GWSRYIPQGMQCSCGALYFTLKPEINNES) lie on the Extracellular side of the membrane. E201 provides a ligand contact to Zn(2+). Residues 203 to 224 (FVIYMFVVHFSIPLIVIFFCYG) traverse the membrane as a helical segment. Residues 225–252 (QLVFTVKEAAAQQQESATTQKAEKEVTR) lie on the Cytoplasmic side of the membrane. The helical transmembrane segment at 253 to 274 (MVIIMVIAFLICWLPYAGVAFY) threads the bilayer. The Extracellular portion of the chain corresponds to 275–286 (IFTHQGSDFGPI). Position 279 (Q279) interacts with Zn(2+). The chain crosses the membrane as a helical span at residues 287 to 308 (FMTIPAFFAKSSSVYNPVIYIM). At K296 the chain carries N6-(retinylidene)lysine. Topologically, residues 309 to 348 (MNKQFRNCMLTTLCCGKNPLGDDEASTTVSKTETSQVAPA) are cytoplasmic. 2 S-palmitoyl cysteine lipidation sites follow: C322 and C323. The tract at residues 330–348 (DDEASTTVSKTETSQVAPA) is interaction with SAG. S334 carries the post-translational modification Phosphoserine. S334 carries the phosphoserine; by RK and GRK7 modification. Phosphothreonine is present on residues T335 and T336. 2 positions are modified to phosphothreonine; by RK and GRK7: T335 and T336. S338 carries the phosphoserine; by RK and GRK7 modification. Phosphothreonine occurs at positions 340 and 342. S343 carries the phosphoserine; by RK and GRK7 modification.

Belongs to the G-protein coupled receptor 1 family. Opsin subfamily. As to quaternary structure, homodimer. May form a complex composed of RHO, GRK1 and RCVRN in a Ca(2+)-dependent manner; RCVRN prevents the interaction between GRK1 and RHO. Interacts with GRK1. Interacts (phosphorylated form) with SAG. Interacts with GNAT1. Interacts with GNAT3. SAG and G-proteins compete for a common binding site. Interacts with PRCD; the interaction promotes PRCD stability. Forms a complex with ASAP1 and ARF4. Forms a complex with ASAP1, RAB11A, Rabin8/RAB3IP, ARF4 and RAB11FIP3; the complex regulates Golgi-to-cilia rhodopsin/RHO transport in photoreceptors. Phosphorylated on some or all of the serine and threonine residues present in the C-terminal region. Post-translationally, contains one covalently linked retinal chromophore. Upon light absorption, the covalently bound 11-cis-retinal is converted to all-trans-retinal. After hydrolysis of the Schiff base and release of the covalently bound all-trans-retinal, active rhodopsin is regenerated by binding of a fresh molecule of 11-cis-retinal.

The protein resides in the membrane. It is found in the cell projection. It localises to the cilium. The protein localises to the photoreceptor outer segment. In terms of biological role, photoreceptor required for image-forming vision at low light intensity. Required for photoreceptor cell viability after birth. Light-induced isomerization of 11-cis to all-trans retinal triggers a conformational change that activates signaling via G-proteins. Subsequent receptor phosphorylation mediates displacement of the bound G-protein alpha subunit by the arrestin SAG and terminates signaling. In Ovis aries (Sheep), this protein is Rhodopsin (RHO).